Here is a 1465-residue protein sequence, read N- to C-terminus: Neuropathy target esterase sws (1465 aa).

The Lumenal segment spans residues 1–34 (MDVLEMLRASASGSYNTIFSEAWCQYVSKQITAT). Residues 35–55 (MYMYCALGMMGVLFLAWFMYF) traverse the membrane as a helical segment. Residues 56–1465 (KRMARLRLRD…RSSANNETKN (1410 aa)) are Cytoplasmic-facing. 174 to 301 (IFGHFEKPVF…IRVIQVIMIR (128 aa)) is an a nucleoside 3',5'-cyclic phosphate binding site. 2 stretches are compositionally biased toward polar residues: residues 331–349 (STMS…RQTP) and 434–454 (QQSV…TPDG). Disordered regions lie at residues 331–421 (STMS…TEVH) and 434–460 (QQSV…SCPP). Ser-446 and Ser-455 each carry phosphoserine. Residues 484–611 (ELGL…VVRR) and 600–727 (IVLD…LSHR) each bind a nucleoside 3',5'-cyclic phosphate. Residues 954–1120 (LVLGGGGARG…VNNLPGHLWR (167 aa)) form the PNPLA domain. The short motif at 958–963 (GGGARG) is the GXGXXG element. The GXSXG motif lies at 985-989 (GVSIG). Ser-987 serves as the catalytic Nucleophile. The Proton acceptor role is filled by Asp-1107. The DGA/G motif lies at 1107-1109 (DGG). Residue Ser-1201 is modified to Phosphoserine. The segment at 1371 to 1465 (LERKTDKSTQ…RSSANNETKN (95 aa)) is disordered. A compositionally biased stretch (low complexity) spans 1378 to 1390 (STQSSPPTSSRTS). The span at 1392 to 1402 (RGKEEARHMDN) shows a compositional bias: basic and acidic residues. Residues 1413 to 1424 (TGSGATEGIHTS) show a composition bias toward polar residues. The segment covering 1447–1456 (VYKDEDKENR) has biased composition (basic and acidic residues).

It belongs to the NTE family. In terms of assembly, interacts with Pka-C3; interaction inhibits the catalytic function of Pka-C3 and the esterase activity of sws.

It localises to the endoplasmic reticulum membrane. It catalyses the reaction a 1-acyl-sn-glycero-3-phosphocholine + H2O = sn-glycerol 3-phosphocholine + a fatty acid + H(+). Phospholipase B that deacylates intracellular phosphatidylcholine (PtdCho), generating glycerophosphocholine (GroPtdCho). This deacylation occurs at both sn-2 and sn-1 positions of PtdCho. Its specific chemical modification by certain organophosphorus (OP) compounds leads to distal axonopathy. Plays a role in the signaling mechanism between neurons and glia that regulates glia wrapping during development of the adult brain. Essential for membrane lipid homeostasis and cell survival in both neurons and glia of the adult brain. This Drosophila erecta (Fruit fly) protein is Neuropathy target esterase sws.